Here is a 328-residue protein sequence, read N- to C-terminus: MRPSSNVTEFVLLGLTQDPDVKKTLFVMFLLIYIVTMVGNLLIWVTTIGSPSLGSLMYFFLAYLSLMDAIYSTAMSPKLMIDLLCDKIAISLSACMGQLFIEHLLGGAEVFLLVVMAYDRYVAISKPLHYLNIMNRLVCILLLVVAMIGGFVHSVVQIVFLYSLPICGPNVIDHSVCDMYPLLELLCLDTYFIGLTVVANGGIICMVIFTFLLISCGVILNFLKTYSQEERHKALPTCISHIIVVALVFVPCIFMYVRPVSNFPFDKLMTVFYSIITLMLNPLIYSLRQSEMKNAMKNLWCEKLSIVRKRVSPTLNIFIPSSKATNRR.

Over 1-23 (MRPSSNVTEFVLLGLTQDPDVKK) the chain is Extracellular. Residue Asn-6 is glycosylated (N-linked (GlcNAc...) asparagine). A helical membrane pass occupies residues 24–47 (TLFVMFLLIYIVTMVGNLLIWVTT). Residues 48–55 (IGSPSLGS) are Cytoplasmic-facing. A helical transmembrane segment spans residues 56–77 (LMYFFLAYLSLMDAIYSTAMSP). Over 78-98 (KLMIDLLCDKIAISLSACMGQ) the chain is Extracellular. Cys-95 and Cys-187 are oxidised to a cystine. A helical transmembrane segment spans residues 99–118 (LFIEHLLGGAEVFLLVVMAY). Over 119-137 (DRYVAISKPLHYLNIMNRL) the chain is Cytoplasmic. Residues 138 to 156 (VCILLLVVAMIGGFVHSVV) traverse the membrane as a helical segment. At 157-193 (QIVFLYSLPICGPNVIDHSVCDMYPLLELLCLDTYFI) the chain is on the extracellular side. The helical transmembrane segment at 194–217 (GLTVVANGGIICMVIFTFLLISCG) threads the bilayer. The Cytoplasmic portion of the chain corresponds to 218–233 (VILNFLKTYSQEERHK). The helical transmembrane segment at 234-256 (ALPTCISHIIVVALVFVPCIFMY) threads the bilayer. At 257-267 (VRPVSNFPFDK) the chain is on the extracellular side. The helical transmembrane segment at 268–287 (LMTVFYSIITLMLNPLIYSL) threads the bilayer. The Cytoplasmic segment spans residues 288–328 (RQSEMKNAMKNLWCEKLSIVRKRVSPTLNIFIPSSKATNRR).

This sequence belongs to the G-protein coupled receptor 1 family.

The protein localises to the cell membrane. Odorant receptor. In Homo sapiens (Human), this protein is Olfactory receptor 4A16 (OR4A16).